A 401-amino-acid chain; its full sequence is Phosphoglycerate kinase, cytosolic (401 aa).

Alanine 24, aspartate 25, asparagine 27, arginine 41, serine 63, histidine 64, glycine 66, arginine 67, arginine 122, histidine 154, and arginine 155 together coordinate (2R)-3-phosphoglycerate. Glycine 200 contacts ADP. Glycine 200 serves as a coordination point for CDP. Positions 202 and 206 each coordinate AMP. Lysine 206 is an ATP binding site. Glycine 224 lines the ADP pocket. Glycine 224 provides a ligand contact to CDP. AMP is bound by residues glycine 225 and glycine 297. Residues glycine 225 and glycine 297 each coordinate ATP. Residues glycine 322 and phenylalanine 327 each coordinate CDP. Position 327 (phenylalanine 327) interacts with ADP. Glutamate 328 lines the AMP pocket. Residues glutamate 328, aspartate 359, and serine 360 each contribute to the ATP site. Mg(2+) is bound at residue aspartate 359.

The protein belongs to the phosphoglycerate kinase family. Monomer. The cofactor is Mg(2+).

The protein resides in the cytoplasm. It carries out the reaction (2R)-3-phosphoglycerate + ATP = (2R)-3-phospho-glyceroyl phosphate + ADP. It participates in carbohydrate degradation; glycolysis; pyruvate from D-glyceraldehyde 3-phosphate: step 2/5. In Triticum aestivum (Wheat), this protein is Phosphoglycerate kinase, cytosolic.